The sequence spans 300 residues: Putative 1-phosphofructokinase (300 aa).

ATP contacts are provided by residues Ser-214 to Gly-219 and Gly-246 to Asp-247. Residue Asp-247 is the Proton acceptor of the active site.

The protein belongs to the carbohydrate kinase PfkB family.

The catalysed reaction is beta-D-fructose 1-phosphate + ATP = beta-D-fructose 1,6-bisphosphate + ADP + H(+). Functionally, catalyzes the ATP-dependent phosphorylation of fructose-l-phosphate to fructose-l,6-bisphosphate. The chain is Putative 1-phosphofructokinase (fruK) from Mycoplasma pneumoniae (strain ATCC 29342 / M129 / Subtype 1) (Mycoplasmoides pneumoniae).